An 800-amino-acid polypeptide reads, in one-letter code: Phenylalanine--tRNA ligase beta subunit (800 aa).

Residues 39–154 (TKDIKNLVVG…ESQVPGTDAL (116 aa)) enclose the tRNA-binding domain. A B5 domain is found at 408 to 483 (AFITPIDITA…RIYGYDDIPS (76 aa)). Mg(2+)-binding residues include D461, D467, E470, and E471. The FDX-ACB domain occupies 708 to 800 (PRFPGMSRDI…ALIEQGAVIR (93 aa)).

The protein belongs to the phenylalanyl-tRNA synthetase beta subunit family. Type 1 subfamily. In terms of assembly, tetramer of two alpha and two beta subunits. Requires Mg(2+) as cofactor.

It localises to the cytoplasm. The enzyme catalyses tRNA(Phe) + L-phenylalanine + ATP = L-phenylalanyl-tRNA(Phe) + AMP + diphosphate + H(+). The sequence is that of Phenylalanine--tRNA ligase beta subunit from Staphylococcus aureus (strain MRSA252).